An 87-amino-acid polypeptide reads, in one-letter code: Cytochrome c6 (87 aa).

Heme c contacts are provided by Cys-10, Cys-13, His-14, and Met-56.

It belongs to the cytochrome c family. PetJ subfamily. In terms of assembly, monomer. In terms of processing, binds 1 heme c group covalently per subunit.

The protein localises to the plastid. It localises to the chloroplast thylakoid lumen. Functionally, functions as an electron carrier between membrane-bound cytochrome b6-f and photosystem I in oxygenic photosynthesis. The protein is Cytochrome c6 (petJ) of Euglena viridis (Cercaria viridis).